The primary structure comprises 97 residues: Citrate lyase acyl carrier protein (97 aa).

Ser14 is modified (O-(phosphoribosyl dephospho-coenzyme A)serine).

Belongs to the CitD family. In terms of assembly, oligomer with a subunit composition of (alpha,beta,gamma)6.

The protein resides in the cytoplasm. Covalent carrier of the coenzyme of citrate lyase. This chain is Citrate lyase acyl carrier protein, found in Rhodopseudomonas palustris (strain BisA53).